We begin with the raw amino-acid sequence, 549 residues long: MARDATKLEATVAKLKKHWAESAPRDMRAAFSADPGRFGRYSLCLDDLLFDWSKCRVNDETMALLKELAVAADVEGRRAAMFAGEHINNTEDRVVLHVALRDTSSKEVLVDGHNVLPDVKHVLDRMAAFADGIRSGALKGATGRKITDIVNIGIGGSDLGPVMATLALAPYHDGPRAHFVSNIDGAHIADTLSPLDPASTLIIVASKTFTTIETMTNAQTARKWVADTLGEAAVGAHFAAVSTALDKVAAFGIPEDRVFGFWDWVGGRYSVWSAIGLPVMIAVGPDNFRKFLAGAHAMDVHFRDAPLEKNLPVMLGLIGYWHRAICGYGSRAIIPYDQRLSRLPAYLQQLDMESNGKSVTLDGKPVSGPTGPVVWGEPGTNGQHAFFQLLHQGTDTIPLEFIVAAKGHEPTLDHQHEMLMANCLAQSEALMKGRTLDEARAQLQAKNLPASQVERIAPHRVFSGNRPSLTLIHDMLDPYALGRLIALYEHRVFVEAQIFGINAFDQWGVELGKELATELLPVVSGKEGASGRDASTQGLVAHLHARRKA.

Residue glutamate 353 is the Proton donor of the active site. Residues histidine 384 and lysine 513 contribute to the active site.

This sequence belongs to the GPI family.

It localises to the cytoplasm. The enzyme catalyses alpha-D-glucose 6-phosphate = beta-D-fructose 6-phosphate. The protein operates within carbohydrate biosynthesis; gluconeogenesis. Its pathway is carbohydrate degradation; glycolysis; D-glyceraldehyde 3-phosphate and glycerone phosphate from D-glucose: step 2/4. Its function is as follows. Catalyzes the reversible isomerization of glucose-6-phosphate to fructose-6-phosphate. The chain is Glucose-6-phosphate isomerase from Brucella suis (strain ATCC 23445 / NCTC 10510).